Here is a 399-residue protein sequence, read N- to C-terminus: Guanine nucleotide-binding protein negative regulator 1 (399 aa).

WD repeat units lie at residues 44 to 83 (KPLN…LSKK), 105 to 145 (YSYS…NKAS), 150 to 194 (DHQE…VMTT), 207 to 247 (SLKG…PCQL), 252 to 292 (ERGN…DMVY), and 296 to 337 (GHRG…EETH).

As to quaternary structure, interacts with gpa1.

The protein resides in the cytoplasm. Its function is as follows. Negatively regulates the pheromone-response pathway. Acts as a structural mimic of the G protein beta subunit thereby interacting with gpa1 which then inhibits gpa1 signaling. In Schizosaccharomyces pombe (strain 972 / ATCC 24843) (Fission yeast), this protein is Guanine nucleotide-binding protein negative regulator 1 (gnr1).